The following is a 414-amino-acid chain: Glucose-1-phosphate adenylyltransferase (414 aa).

Residues glycine 164, glutamate 181–lysine 182, and serine 199 each bind alpha-D-glucose 1-phosphate.

This sequence belongs to the bacterial/plant glucose-1-phosphate adenylyltransferase family. Homotetramer.

The enzyme catalyses alpha-D-glucose 1-phosphate + ATP + H(+) = ADP-alpha-D-glucose + diphosphate. It participates in glycan biosynthesis; glycogen biosynthesis. Involved in the biosynthesis of ADP-glucose, a building block required for the elongation reactions to produce glycogen. Catalyzes the reaction between ATP and alpha-D-glucose 1-phosphate (G1P) to produce pyrophosphate and ADP-Glc. This chain is Glucose-1-phosphate adenylyltransferase, found in Kocuria rhizophila (strain ATCC 9341 / DSM 348 / NBRC 103217 / DC2201).